The sequence spans 282 residues: NADPH-dependent 7-cyano-7-deazaguanine reductase (282 aa).

Residue 88–90 (IES) participates in substrate binding. 90–91 (SK) is a binding site for NADPH. The Thioimide intermediate role is filled by cysteine 190. The active-site Proton donor is aspartate 197. 229–230 (HE) contacts substrate. 258–259 (RG) is a binding site for NADPH.

It belongs to the GTP cyclohydrolase I family. QueF type 2 subfamily. Homodimer.

It localises to the cytoplasm. The catalysed reaction is 7-aminomethyl-7-carbaguanine + 2 NADP(+) = 7-cyano-7-deazaguanine + 2 NADPH + 3 H(+). Its pathway is tRNA modification; tRNA-queuosine biosynthesis. Functionally, catalyzes the NADPH-dependent reduction of 7-cyano-7-deazaguanine (preQ0) to 7-aminomethyl-7-deazaguanine (preQ1). This is NADPH-dependent 7-cyano-7-deazaguanine reductase from Salmonella paratyphi A (strain ATCC 9150 / SARB42).